A 358-amino-acid polypeptide reads, in one-letter code: tRNA-specific 2-thiouridylase MnmA (358 aa).

ATP is bound by residues 8–15 (AMSGGVDS) and M35. The segment at 95 to 97 (NPD) is interaction with target base in tRNA. The active-site Nucleophile is the C100. C100 and C194 are joined by a disulfide. An ATP-binding site is contributed by G124. An interaction with tRNA region spans residues 144 to 146 (KDQ). C194 functions as the Cysteine persulfide intermediate in the catalytic mechanism. The interaction with tRNA stretch occupies residues 301–302 (RY).

The protein belongs to the MnmA/TRMU family.

It localises to the cytoplasm. It catalyses the reaction S-sulfanyl-L-cysteinyl-[protein] + uridine(34) in tRNA + AH2 + ATP = 2-thiouridine(34) in tRNA + L-cysteinyl-[protein] + A + AMP + diphosphate + H(+). Catalyzes the 2-thiolation of uridine at the wobble position (U34) of tRNA, leading to the formation of s(2)U34. The polypeptide is tRNA-specific 2-thiouridylase MnmA (Chlamydia trachomatis serovar L2 (strain ATCC VR-902B / DSM 19102 / 434/Bu)).